Here is a 333-residue protein sequence, read N- to C-terminus: Phosphoribosylformylglycinamidine cyclo-ligase (333 aa).

Belongs to the AIR synthase family.

It localises to the cytoplasm. The enzyme catalyses 2-formamido-N(1)-(5-O-phospho-beta-D-ribosyl)acetamidine + ATP = 5-amino-1-(5-phospho-beta-D-ribosyl)imidazole + ADP + phosphate + H(+). Its pathway is purine metabolism; IMP biosynthesis via de novo pathway; 5-amino-1-(5-phospho-D-ribosyl)imidazole from N(2)-formyl-N(1)-(5-phospho-D-ribosyl)glycinamide: step 2/2. The protein is Phosphoribosylformylglycinamidine cyclo-ligase of Methanococcoides burtonii (strain DSM 6242 / NBRC 107633 / OCM 468 / ACE-M).